The primary structure comprises 413 residues: uncharacterized protein (413 aa).

The 128-residue stretch at 2-129 (RILIVDDENT…KTTWKLRLME (128 aa)) folds into the Response regulatory domain. The residue at position 54 (Asp-54) is a 4-aspartylphosphate.

This is an uncharacterized protein from Sinorhizobium fredii (strain NBRC 101917 / NGR234).